An 80-amino-acid chain; its full sequence is Probable antimicrobial peptide clone Con10 (80 aa).

Residues 1–24 form the signal peptide; sequence MQYKTKTFLVIFLAYLVVTNEAEA. The propeptide occupies 56–80; that stretch reads EIEDFFDPYQRELDLELERLLSQLQ.

It belongs to the non-disulfide-bridged peptide (NDBP) superfamily. Medium-length antimicrobial peptide (group 3) family. In terms of tissue distribution, expressed by the venom gland.

Its subcellular location is the secreted. It localises to the target cell membrane. Functionally, antimicrobial peptide. Has antifungal activity against all strains tested (MIC=12.5-200 uM). May act by disrupting the integrity of the bacterial cell membrane. This is Probable antimicrobial peptide clone Con10 from Opisthacanthus cayaporum (South American scorpion).